Here is a 1030-residue protein sequence, read N- to C-terminus: Zinc finger and SCAN domain-containing protein 20 (1030 aa).

Residues 22–42 (DSWGSDSRPEKESHSPVPGPE) are disordered. An SCAN box domain is found at 45–127 (RRCFRQFRYR…ALVEDWHREA (83 aa)). 4 disordered regions span residues 178–201 (DLSK…PTVP), 213–285 (GKSQ…DSAQ), 411–441 (SGGP…WEPE), and 578–600 (TGLP…GEME). Basic and acidic residues predominate over residues 225 to 240 (AKKEPCQDPAGGDRGD). Composition is skewed to acidic residues over residues 426-441 (SDTE…WEPE) and 589-600 (EADDQEAWGEME). A C2H2-type 1; degenerate zinc finger spans residues 697–719 (YGCDTRAKSFSRKVHFFAPQRTH). A C2H2-type 2; degenerate zinc finger spans residues 725–747 (YKCLGSGKSFSDRANLSTHQRIH). 2 consecutive C2H2-type zinc fingers follow at residues 753 to 775 (YRCL…QRTH) and 781 to 803 (YKCG…QRVH). Disordered stretches follow at residues 801–820 (RVHL…NFGQ) and 828–850 (WRRN…ADSP). 6 C2H2-type zinc fingers span residues 862–884 (YSCP…QRIH), 890–912 (YECA…RRTH), 918–940 (HKCA…QRVH), 946–968 (YECP…QRIH), 974–996 (YKCR…QRIH), and 1002–1024 (YKCT…RRTH).

It belongs to the krueppel C2H2-type zinc-finger protein family.

It localises to the nucleus. Functionally, may be involved in transcriptional regulation. The chain is Zinc finger and SCAN domain-containing protein 20 (Zscan20) from Mus musculus (Mouse).